The following is a 404-amino-acid chain: Argininosuccinate synthase (404 aa).

Residues 11–19 (AYSGGLDTS) and Ala38 contribute to the ATP site. Residues Tyr91 and Ser96 each coordinate L-citrulline. ATP is bound at residue Gly121. L-aspartate contacts are provided by Thr123, Asn127, and Asp128. Position 127 (Asn127) interacts with L-citrulline. L-citrulline contacts are provided by Arg131, Ser181, Ser190, Glu266, and Tyr278.

This sequence belongs to the argininosuccinate synthase family. Type 1 subfamily. In terms of assembly, homotetramer.

It is found in the cytoplasm. It carries out the reaction L-citrulline + L-aspartate + ATP = 2-(N(omega)-L-arginino)succinate + AMP + diphosphate + H(+). Its pathway is amino-acid biosynthesis; L-arginine biosynthesis; L-arginine from L-ornithine and carbamoyl phosphate: step 2/3. In Sulfurimonas denitrificans (strain ATCC 33889 / DSM 1251) (Thiomicrospira denitrificans (strain ATCC 33889 / DSM 1251)), this protein is Argininosuccinate synthase.